A 27-amino-acid polypeptide reads, in one-letter code: Protein YkiD (27 aa).

This chain is Protein YkiD, found in Escherichia coli (strain K12).